Here is a 389-residue protein sequence, read N- to C-terminus: Packaging protein 3 (389 aa).

The segment at 1–131 (MHPVLRQMKP…VKAEVNFQTT (131 aa)) is interaction with packaging protein 1. A disordered region spans residues 350–389 (EKENPDGSVSFQQHERGTQSHENGGHAEPAYSRRQLGRFY). Residues 362-374 (QHERGTQSHENGG) show a composition bias toward basic and acidic residues.

This sequence belongs to the adenoviridae packaging protein 3 family. As to quaternary structure, part of the genome packaging complex composed of packaging proteins 1, 2 and 3; this complex specifically binds to the packaging sequence on the left end of viral genomic DNA and performs packaging of the viral genome. Interacts with hexon-linking protein IIIa; this interaction is required to promote correct genome packaging. Cleaved at different sites by the viral protease during virion maturation.

The protein resides in the host nucleus. Involved in viral genome packaging through its interaction with packaging proteins 1 and 2. After proteolytic cleavage by adenovirus protease, L1 52/55k protein is removed from the capsid during viral maturation. This chain is Packaging protein 3, found in Canine adenovirus serotype 1 (strain CLL) (CAdV-1).